The primary structure comprises 279 residues: Shikimate dehydrogenase (NADP(+)) (279 aa).

Shikimate contacts are provided by residues Ser-21 to Ser-23 and Thr-68. The Proton acceptor role is filled by Lys-72. Position 84 (Glu-84) interacts with NADP(+). The shikimate site is built by Asn-93 and Asp-109. Residues Gly-133–Ala-137, Asn-157–Lys-162, and Met-220 contribute to the NADP(+) site. A shikimate-binding site is contributed by Tyr-222. An NADP(+)-binding site is contributed by Gly-244.

The protein belongs to the shikimate dehydrogenase family. In terms of assembly, homodimer.

It carries out the reaction shikimate + NADP(+) = 3-dehydroshikimate + NADPH + H(+). Its pathway is metabolic intermediate biosynthesis; chorismate biosynthesis; chorismate from D-erythrose 4-phosphate and phosphoenolpyruvate: step 4/7. Involved in the biosynthesis of the chorismate, which leads to the biosynthesis of aromatic amino acids. Catalyzes the reversible NADPH linked reduction of 3-dehydroshikimate (DHSA) to yield shikimate (SA). The sequence is that of Shikimate dehydrogenase (NADP(+)) from Shewanella halifaxensis (strain HAW-EB4).